The sequence spans 213 residues: Large ribosomal subunit protein uL3 (213 aa).

N5-methylglutamine is present on Gln-151.

The protein belongs to the universal ribosomal protein uL3 family. As to quaternary structure, part of the 50S ribosomal subunit. Forms a cluster with proteins L14 and L19. Methylated by PrmB.

In terms of biological role, one of the primary rRNA binding proteins, it binds directly near the 3'-end of the 23S rRNA, where it nucleates assembly of the 50S subunit. The chain is Large ribosomal subunit protein uL3 from Rhizobium leguminosarum bv. trifolii (strain WSM2304).